A 1450-amino-acid polypeptide reads, in one-letter code: Collagen alpha-1(I) chain (1450 aa).

The N-terminal stretch at 1 to 22 is a signal peptide; that stretch reads MFSFVDNRLLVLLAACVLLVRA. The propeptide at 23-148 is N-terminal propeptide; the sequence is LDQEDIESGL…PPGLGGNFAP (126 aa). The 60-residue stretch at 31–90 folds into the VWFC domain; it reads GLCHQEGTTYSDKDVWKPEPCVICVCDNGNIMCDDVTCGDYPVDCPNAEIPFGECCPVCP. A disordered region spans residues 97-1201; it reads YSEQTGVEGP…EPKSHGDGRY (1105 aa). A compositionally biased stretch (basic and acidic residues) spans 106–116; it reads PKGEVGPKGDR. Positions 130–140 are enriched in pro residues; it reads LPGPPGPPGPP. Position 149 is a pyrrolidone carboxylic acid (Gln149). Position 157 is an allysine (Lys157). The span at 166 to 181 shows a compositional bias: pro residues; the sequence is PMGPMGPRGPPGPSGS. 4-hydroxyproline occurs at positions 176, 182, 194, 197, 212, 227, 242, and 248. A compositionally biased stretch (low complexity) spans 182 to 206; it reads PGPQGFQGPSGEPGEPGAAGALGPR. A compositionally biased stretch (basic and acidic residues) spans 215-229; sequence NGDDGESGKPGRPGE. Position 251 is a 5-hydroxylysine; alternate (Lys251). A glycan (O-linked (Gal...) hydroxylysine; alternate) is linked at Lys251. Residues 266 to 292 show a composition bias toward low complexity; that stretch reads NGPAGPKGEPGNPGENGAPGQAGPRGL. A 4-hydroxyproline mark is found at Pro275, Pro278, Pro284, Pro293, Pro299, Pro314, Pro320, Pro329, Pro332, Pro359, Pro362, Pro374, Pro380, Pro389, Pro395, Pro398, and Pro413. Positions 317–331 are enriched in pro residues; that stretch reads AGPPGPTGPTGPPGF. Low complexity predominate over residues 352–374; it reads PQGARGEPGAPGPAGAAGPSGNP. Gly residues predominate over residues 378–387; sequence GQPGGKGATG. A compositionally biased stretch (low complexity) spans 388-443; sequence SPGIAGAPGFPGARGAPGPQGPAGAPGPKGNNGEPGAQGNKGEPGAKGEPGPAGVQ. Lys416 bears the 5-hydroxylysine mark. 4-hydroxyproline is present on residues Pro422, Pro437, Pro446, Pro461, Pro467, Pro476, and Pro482. The segment covering 471–480 has biased composition (gly residues); it reads GERGGPGSRG. Lys491 is modified (5-hydroxylysine). 4-hydroxyproline occurs at positions 494, 515, 521, 530, 533, 551, 569, 578, 590, 608, 626, 632, 644, 650, 656, and 668. Low complexity-rich tracts occupy residues 568–578 and 586–596; these read FPGPKGAAGEP and VAGPPGATGAP. Positions 637–650 are enriched in low complexity; sequence PAGEAGKPGEQGAP. The span at 669–678 shows a compositional bias: gly residues; the sequence is GERGGQGPAG. Positions 679–701 are enriched in low complexity; it reads AQGPRGSPGSPGNDGAKGEAGAA. 4-hydroxyproline is present on residues Pro689, Pro704, Pro710, Pro716, and Pro725. The segment covering 702-711 has biased composition (gly residues); it reads GAPGGRGPPG. At Lys737 the chain carries 5-hydroxylysine. 4-hydroxyproline is present on residues Pro743, Pro758, Pro764, Pro785, Pro791, Pro794, Pro803, Pro809, Pro827, Pro836, and Pro845. The span at 796 to 806 shows a compositional bias: low complexity; that stretch reads PAGICGPPGAD. Residues 817–869 show a composition bias toward low complexity; the sequence is DAGPKGDAGAPGPAGPTGAPGPAGNVGAPGPKGTRGAAGPPGATGFPGAAGRL. 5-hydroxylysine is present on Lys848. 4-hydroxyproline is present on residues Pro857 and Pro863. A 3-hydroxyproline modification is found at Pro871. 4-hydroxyproline is present on residues Pro872, Pro881, Pro884, Pro908, Pro914, Pro923, Pro932, Pro950, Pro962, Pro968, Pro983, Pro989, Pro995, Pro1004, and Pro1010. The span at 917-943 shows a compositional bias: low complexity; it reads SGEKGSPGSDGPAGAPGIPGPQGIAGQ. Residues 982-997 show a composition bias toward pro residues; sequence PPGPSGPPGLGGPPGE. At Lys1019 the chain carries 5-hydroxylysine. Pro residues predominate over residues 1028-1043; it reads SGPPGAPGAPGAPGPV. 4-hydroxyproline occurs at positions 1031, 1034, and 1037. The segment covering 1064–1078 has biased composition (low complexity); that stretch reads AGPSGVRGAPGPAGA. Basic and acidic residues predominate over residues 1079-1093; the sequence is RGDKGEAGEQGERGM. Residue Lys1082 is modified to 5-hydroxylysine. A 5-hydroxylysine; alternate modification is found at Lys1094. O-linked (Gal...) hydroxylysine; alternate glycosylation is present at Lys1094. 4-hydroxyproline occurs at positions 1106 and 1109. Residues 1120 to 1129 show a composition bias toward pro residues; that stretch reads PSGPAGPRGP. Residues Pro1130 and Pro1145 each carry the 4-hydroxyproline modification. Residues 1130 to 1145 show a composition bias toward low complexity; it reads PGSSGSTGKDGVNGLP. Pro1150 carries the 3-hydroxyproline modification. Pro1151 is subject to 4-hydroxyproline. Residues 1163–1178 show a composition bias toward pro residues; sequence AGPPGPPGPPGPPGPP. 3-hydroxyproline is present on Pro1165. Pro1166 carries the 4-hydroxyproline modification. Pro1168 bears the 3-hydroxyproline mark. A 4-hydroxyproline modification is found at Pro1169. A 3-hydroxyproline modification is found at Pro1171. 4-hydroxyproline occurs at positions 1172, 1175, and 1178. An Allysine modification is found at Lys1194. Positions 1205–1450 are cleaved as a propeptide — C-terminal propeptide; sequence DDANVVRDRD…GIDIGPVCFL (246 aa). The Fibrillar collagen NC1 domain occupies 1215 to 1450; it reads LEVDTTLKSL…GIDIGPVCFL (236 aa). Intrachain disulfides connect Cys1245/Cys1277, Cys1285/Cys1448, and Cys1356/Cys1401. Positions 1263, 1265, 1266, 1268, and 1271 each coordinate Ca(2+). N-linked (GlcNAc...) asparagine glycosylation occurs at Asn1351.

This sequence belongs to the fibrillar collagen family. As to quaternary structure, trimers of one alpha 2(I) and two alpha 1(I) chains. Post-translationally, contains mostly 4-hydroxyproline. Proline residues at the third position of the tripeptide repeating unit (G-X-Y) are hydroxylated in some or all of the chains. In terms of processing, contains 3-hydroxyproline at a few sites. This modification occurs on the first proline residue in the sequence motif Gly-Pro-Hyp, where Hyp is 4-hydroxyproline. Lysine residues at the third position of the tripeptide repeating unit (G-X-Y) are 5-hydroxylated in some or all of the chains. Post-translationally, O-glycosylated on hydroxylated lysine residues. The O-linked glycan consists of a Glc-Gal disaccharide.

It is found in the secreted. The protein resides in the extracellular space. It localises to the extracellular matrix. Type I collagen is a member of group I collagen (fibrillar forming collagen). The sequence is that of Collagen alpha-1(I) chain (COL1A1) from Cynops pyrrhogaster (Japanese fire-bellied newt).